Reading from the N-terminus, the 218-residue chain is Adenylate kinase (218 aa).

ATP is bound at residue 10 to 15 (GAGKGT). The NMP stretch occupies residues 30–59 (STGDMLRAAIAKGTPLGLSAQKIMESGGLV). AMP is bound by residues T31, R36, 57 to 59 (GLV), 85 to 88 (GFPR), and Q92. The tract at residues 122–159 (GRRIHQPSGRVYHVVNQPPKNPGVDDITGEPLIQRDDD) is LID. ATP-binding positions include R123 and 132-133 (VY). AMP is bound by residues R156 and R167. G203 is an ATP binding site.

The protein belongs to the adenylate kinase family. As to quaternary structure, monomer.

The protein localises to the cytoplasm. It catalyses the reaction AMP + ATP = 2 ADP. Its pathway is purine metabolism; AMP biosynthesis via salvage pathway; AMP from ADP: step 1/1. In terms of biological role, catalyzes the reversible transfer of the terminal phosphate group between ATP and AMP. Plays an important role in cellular energy homeostasis and in adenine nucleotide metabolism. This chain is Adenylate kinase, found in Legionella pneumophila (strain Corby).